A 92-amino-acid chain; its full sequence is Protein OP-ORF (92 aa).

Positions 53-82 (KMLAATISILEEEVTELVTELNNTTNLTAK) form a coiled coil.

The polypeptide is Protein OP-ORF (Rice dwarf virus (isolate Fujian) (RDV)).